The sequence spans 462 residues: UDP-N-acetylmuramoylalanine--D-glutamate ligase (462 aa).

112–118 (GTNGKTT) lines the ATP pocket.

It belongs to the MurCDEF family.

The protein localises to the cytoplasm. The catalysed reaction is UDP-N-acetyl-alpha-D-muramoyl-L-alanine + D-glutamate + ATP = UDP-N-acetyl-alpha-D-muramoyl-L-alanyl-D-glutamate + ADP + phosphate + H(+). It participates in cell wall biogenesis; peptidoglycan biosynthesis. In terms of biological role, cell wall formation. Catalyzes the addition of glutamate to the nucleotide precursor UDP-N-acetylmuramoyl-L-alanine (UMA). The polypeptide is UDP-N-acetylmuramoylalanine--D-glutamate ligase (Nostoc sp. (strain PCC 7120 / SAG 25.82 / UTEX 2576)).